The sequence spans 602 residues: Aspartate--tRNA(Asp/Asn) ligase (602 aa).

Glu191 lines the L-aspartate pocket. The tract at residues 215 to 218 (QLYK) is aspartate. Arg237 provides a ligand contact to L-aspartate. Residues 237–239 (RDE) and Gln246 contribute to the ATP site. An L-aspartate-binding site is contributed by His465. Residue Glu499 participates in ATP binding. Arg506 is a binding site for L-aspartate. 551 to 554 (GLDR) contributes to the ATP binding site.

It belongs to the class-II aminoacyl-tRNA synthetase family. Type 1 subfamily. As to quaternary structure, homodimer.

The protein localises to the cytoplasm. The catalysed reaction is tRNA(Asx) + L-aspartate + ATP = L-aspartyl-tRNA(Asx) + AMP + diphosphate. Aspartyl-tRNA synthetase with relaxed tRNA specificity since it is able to aspartylate not only its cognate tRNA(Asp) but also tRNA(Asn). Reaction proceeds in two steps: L-aspartate is first activated by ATP to form Asp-AMP and then transferred to the acceptor end of tRNA(Asp/Asn). This is Aspartate--tRNA(Asp/Asn) ligase from Treponema pallidum (strain Nichols).